The chain runs to 208 residues: Calcyphosin-like protein (208 aa).

EF-hand domains are found at residues 39 to 74 (AGIKGLGRVFRIMDDNNNRTLDFKEFLKGLNDYAVV), 75 to 110 (MEKEEAEELFQRFDRDGSGTIDFNEFLLTLRPPMSR), 111 to 146 (ARKEVIMKAFRKLDKTGDGVITIEDLREVYNAKHHP), and 154 to 191 (TEEQVFRKFLDNFDSPYDKDGLVTPEEFMNYYAGVSAS). Ca(2+) contacts are provided by D52, N54, N56, T58, E63, D88, D90, S92, T94, and E99.

The protein resides in the cytoplasm. The protein is Calcyphosin-like protein (Capsl) of Mus musculus (Mouse).